We begin with the raw amino-acid sequence, 90 residues long: uncharacterized protein (90 aa).

A helical transmembrane segment spans residues 12–32 (VVGGLSFWSFSAGVIMIVNAF).

It is found in the membrane. This is an uncharacterized protein from Mycoplasma pneumoniae (strain ATCC 29342 / M129 / Subtype 1) (Mycoplasmoides pneumoniae).